We begin with the raw amino-acid sequence, 953 residues long: Translation initiation factor IF-2 (953 aa).

Disordered stretches follow at residues 48 to 240 and 279 to 363; these read SSFS…AQQE and TKLK…TERK. Composition is skewed to basic and acidic residues over residues 80–89, 98–111, and 140–188; these read TGSEHVEKTQ, FKAE…EQAA, and QGDK…ENHK. The span at 191 to 207 shows a compositional bias: polar residues; that stretch reads RFTNQKKQGRQEPQSKS. Basic and acidic residues predominate over residues 229 to 240; it reads RQSETRFRAQQE. Positions 282–291 are enriched in polar residues; sequence KSSNISAKST. Positions 300–317 are enriched in basic and acidic residues; sequence ARPEKNRELTHHSQEGQK. The segment covering 322–338 has biased composition (low complexity); that stretch reads SWNSQNQVRNQKNSNWN. Basic residues predominate over residues 339 to 348; that stretch reads KNKKTKKGKN. The 170-residue stretch at 454 to 623 folds into the tr-type G domain; it reads ERAPVVTIMG…LLVAEVEELK (170 aa). A G1 region spans residues 463–470; the sequence is GHVDHGKT. A GTP-binding site is contributed by 463 to 470; the sequence is GHVDHGKT. A G2 region spans residues 488–492; sequence GITQH. Positions 509 to 512 are G3; that stretch reads DTPG. GTP is bound by residues 509-513 and 563-566; these read DTPGH and NKID. Residues 563-566 form a G4 region; sequence NKID. A G5 region spans residues 599-601; sequence SAK.

The protein belongs to the TRAFAC class translation factor GTPase superfamily. Classic translation factor GTPase family. IF-2 subfamily.

It is found in the cytoplasm. Its function is as follows. One of the essential components for the initiation of protein synthesis. Protects formylmethionyl-tRNA from spontaneous hydrolysis and promotes its binding to the 30S ribosomal subunits. Also involved in the hydrolysis of GTP during the formation of the 70S ribosomal complex. This chain is Translation initiation factor IF-2, found in Streptococcus pyogenes serotype M1.